Reading from the N-terminus, the 243-residue chain is 1-(5-phosphoribosyl)-5-[(5-phosphoribosylamino)methylideneamino] imidazole-4-carboxamide isomerase (243 aa).

Catalysis depends on Asp-8, which acts as the Proton acceptor. Asp-129 functions as the Proton donor in the catalytic mechanism.

It belongs to the HisA/HisF family.

It is found in the cytoplasm. It catalyses the reaction 1-(5-phospho-beta-D-ribosyl)-5-[(5-phospho-beta-D-ribosylamino)methylideneamino]imidazole-4-carboxamide = 5-[(5-phospho-1-deoxy-D-ribulos-1-ylimino)methylamino]-1-(5-phospho-beta-D-ribosyl)imidazole-4-carboxamide. It functions in the pathway amino-acid biosynthesis; L-histidine biosynthesis; L-histidine from 5-phospho-alpha-D-ribose 1-diphosphate: step 4/9. The polypeptide is 1-(5-phosphoribosyl)-5-[(5-phosphoribosylamino)methylideneamino] imidazole-4-carboxamide isomerase (Citrifermentans bemidjiense (strain ATCC BAA-1014 / DSM 16622 / JCM 12645 / Bem) (Geobacter bemidjiensis)).